The following is a 193-amino-acid chain: Selenoprotein S A (193 aa).

The chain crosses the membrane as a helical span at residues 29-49 (WALASYGWYILFGCIILYFLI). The span at 114–125 (IETWDRMQEGKS) shows a compositional bias: basic and acidic residues. The tract at residues 114–193 (IETWDRMQEG…RRGPSSGGUG (80 aa)) is disordered. Positions 137 to 153 (SPSTSASSSPSTSSSAP) are enriched in low complexity. A non-standard amino acid (selenocysteine) is located at residue Sec-192.

This sequence belongs to the selenoprotein S family.

The protein localises to the endoplasmic reticulum membrane. It is found in the cytoplasm. Involved in the degradation process of misfolded endoplasmic reticulum (ER) luminal proteins. Participates in the transfer of misfolded proteins from the ER to the cytosol, where they are destroyed by the proteasome in a ubiquitin-dependent manner. This Xenopus laevis (African clawed frog) protein is Selenoprotein S A (vimp-a).